The primary structure comprises 127 residues: Nuclear transport factor 2 (127 aa).

In terms of domain architecture, NTF2 spans 11 to 124; that stretch reads VGKQFVEHYY…FLLINDFFRL (114 aa).

It localises to the cytoplasm. It is found in the cytosol. Its subcellular location is the nucleus outer membrane. The protein localises to the nucleus. The protein resides in the nuclear pore complex. It localises to the nucleus inner membrane. It is found in the nucleoplasm. In terms of biological role, mediates the import of GDP-bound RAN from the cytoplasm into the nucleus which is essential for the function of RAN in cargo receptor-mediated nucleocytoplasmic transport. Thereby, plays indirectly a more general role in cargo receptor-mediated nucleocytoplasmic transport. Interacts with GDP-bound RAN in the cytosol, recruits it to the nuclear pore complex via its interaction with nucleoporins and promotes its nuclear import. The polypeptide is Nuclear transport factor 2 (Dictyostelium discoideum (Social amoeba)).